Consider the following 185-residue polypeptide: MISVNDFRTGLTISVDNALWQVMDFQHVKPGKGAAFVRSKLRNLRTGSVQEKTFRAGEKVEKAHIENRRMQYLYASGESHVFMDNETYEQIELGENQIERELKFLKENMGVSIMTYQDEVLGVELPNTVELTVSETEPGIKGDTASNVTKPAKLETGLVVQVPIFINEGEMLIINTGEGKYVSRA.

Belongs to the elongation factor P family.

It localises to the cytoplasm. Its pathway is protein biosynthesis; polypeptide chain elongation. Involved in peptide bond synthesis. Stimulates efficient translation and peptide-bond synthesis on native or reconstituted 70S ribosomes in vitro. Probably functions indirectly by altering the affinity of the ribosome for aminoacyl-tRNA, thus increasing their reactivity as acceptors for peptidyl transferase. In Bacillus mycoides (strain KBAB4) (Bacillus weihenstephanensis), this protein is Elongation factor P.